The chain runs to 239 residues: Cytochrome b6-f complex iron-sulfur subunit 1, cyanelle (239 aa).

A cyanelle-targeting transit peptide spans Met1–Ser60. A helical membrane pass occupies residues Leu81–Val101. The region spanning Val125 to Ala221 is the Rieske domain. 4 residues coordinate [2Fe-2S] cluster: Cys167, His169, Cys185, and His188. Cysteines 172 and 187 form a disulfide.

This sequence belongs to the Rieske iron-sulfur protein family. As to quaternary structure, the 4 large subunits of the cytochrome b6-f complex are cytochrome b6, subunit IV (17 kDa polypeptide, petD), cytochrome f and the Rieske protein, while the 4 small subunits are petG, petL, petM and petN. The complex functions as a dimer. It depends on [2Fe-2S] cluster as a cofactor.

The protein resides in the plastid. Its subcellular location is the cyanelle thylakoid membrane. It carries out the reaction 2 oxidized [plastocyanin] + a plastoquinol + 2 H(+)(in) = 2 reduced [plastocyanin] + a plastoquinone + 4 H(+)(out). Functionally, component of the cytochrome b6-f complex, which mediates electron transfer between photosystem II (PSII) and photosystem I (PSI), cyclic electron flow around PSI, and state transitions. The sequence is that of Cytochrome b6-f complex iron-sulfur subunit 1, cyanelle (petC-1) from Cyanophora paradoxa.